A 303-amino-acid chain; its full sequence is Ribosomal protein L11 methyltransferase (303 aa).

Residues Thr144, Gly165, Asp187, and Asn235 each contribute to the S-adenosyl-L-methionine site.

It belongs to the methyltransferase superfamily. PrmA family.

The protein localises to the cytoplasm. The catalysed reaction is L-lysyl-[protein] + 3 S-adenosyl-L-methionine = N(6),N(6),N(6)-trimethyl-L-lysyl-[protein] + 3 S-adenosyl-L-homocysteine + 3 H(+). In terms of biological role, methylates ribosomal protein L11. The chain is Ribosomal protein L11 methyltransferase from Prochlorococcus marinus (strain MIT 9301).